A 354-amino-acid polypeptide reads, in one-letter code: CCN family member 3 (354 aa).

The signal sequence occupies residues 1–21; the sequence is MSLFLRKRCLCLGFLLFHLLS. Residues 25-99 form the IGFBP N-terminal domain; it reads ASLRCPSRCP…NNQTGICMVP (75 aa). Intrachain disulfides connect Cys29-Cys55, Cys33-Cys57, Cys37-Cys58, Cys44-Cys61, Cys69-Cys83, and Cys75-Cys96. An N-linked (GlcNAc...) asparagine glycan is attached at Asn91. The VWFC domain occupies 102–168; that stretch reads DNCVFDGVIY…GECCEKWTCG (67 aa). The region spanning 202–247 is the TSP type-1 domain; sequence NCIEQTTEWSACSKSCGMGVSTRVTNRNRQCEMVKQTRLCIVRPCE. A lipid anchor (S-palmitoyl cysteine) is attached at Cys241. Disulfide bonds link Cys261–Cys298, Cys278–Cys312, Cys289–Cys328, Cys292–Cys330, and Cys297–Cys334. The CTCK domain maps to 261-335; it reads CLRTKKSLKA…GTCTCYSNCP (75 aa). Asn277 carries N-linked (GlcNAc...) asparagine glycosylation.

The protein belongs to the CCN family. As to quaternary structure, interacts with FBLN1. Interacts (via CTCK domain) with NOTCH1 (via the EGF-like repeat region). Interacts with GJA1/CX43. Interacts with ITGA5:ITGB1, ITGAV:ITGB3 and ITGAV:ITGB5. Interacts with ZDHHC22; the interaction may lead to CCN3 palmitoylation. In terms of processing, may be palmitoylated on Cys-241, which is important for extracellular secretion. In terms of tissue distribution, expressed in large vessels including the ascending aorta, carotid arteries, and the thoracic aorta, in medium-sized vessels such as coronary arteries and small pulmonary veins and also in small vessels. In addition, also found to be present in the heart (at protein level). Expressed in astrocytes (at protein level). Detected in brain, bone, lung and muscle tissues. Expressed in skin, expression highly increases 5 days post-wounding, peaking on the 7th day to decline after 9 days. Expressed in pancreatic ducts and beta-cell islets. Expressed in the brain, in arcuate nucleus ESR1/KISS1 neurons, during lactation (at protein level).

Its subcellular location is the secreted. It is found in the cytoplasm. The protein localises to the cell junction. The protein resides in the gap junction. Functionally, immediate-early protein playing a role in various cellular processes including proliferation, adhesion, migration, differentiation and survival. Acts by binding to integrins or membrane receptors such as NOTCH1. Essential regulator of hematopoietic stem and progenitor cell function. Inhibits myogenic differentiation through the activation of Notch-signaling pathway. Inhibits vascular smooth muscle cells proliferation by increasing expression of cell-cycle regulators such as CDKN2B or CDKN1A independently of TGFB1 signaling. Ligand of integrins ITGAV:ITGB3 and ITGA5:ITGB1, acts directly upon endothelial cells to stimulate pro-angiogenic activities and induces angiogenesis. In endothelial cells, supports cell adhesion, induces directed cell migration (chemotaxis) and promotes cell survival. Also plays a role in cutaneous wound healing acting as integrin receptor ligand. Supports skin fibroblast adhesion through ITGA5:ITGB1 and ITGA6:ITGB1 and induces fibroblast chemotaxis through ITGAV:ITGB5. Seems to enhance bFGF-induced DNA synthesis in fibroblasts. Involved in bone regeneration as a negative regulator. Enhances the articular chondrocytic phenotype, whereas it repressed the one representing endochondral ossification. Impairs pancreatic beta-cell function, inhibits beta-cell proliferation and insulin secretion. Plays a role as negative regulator of endothelial pro-inflammatory activation reducing monocyte adhesion, its anti-inflammatory effects occur secondary to the inhibition of NF-kappaB signaling pathway. Contributes to the control and coordination of inflammatory processes in atherosclerosis. Attenuates inflammatory pain through regulation of IL1B- and TNF-induced MMP9, MMP2 and CCL2 expression. Inhibits MMP9 expression through ITGB1 engagement. Brain osteoanabolic hormone. During lactation, maintains the maternal skeleton and viability of offspring. In this context, may act on osteochondral skeletal stem cells. The polypeptide is CCN family member 3 (Ccn3) (Mus musculus (Mouse)).